We begin with the raw amino-acid sequence, 299 residues long: MERQLDAYCEHLRSERQVSPHTLSAYRRDLEKVLGWCQKQNIGSWAALDIQRLRSLIARLHQQGQSSRSLARLLSAVRGLYHYLNREGLCDHDPATGLAPPKGERRLPKTLDTDRALQLLEGAVEDDFLARRDQAILELFYSSGLRLSELTGLNLDQLDLADGMVQVLGKGSKTRLLPVGRKAREALEQWLPLRALTNPADDAVFVSQQGRRLGPRAIQLRVKAAGERELGQNLHPHMLRHSFASHLLESSQDLRAVQELLGHSDIKTTQIYTHLDFQHLATVYDSAHPRAKRIKGDES.

The 85-residue stretch at 1–85 folds into the Core-binding (CB) domain; that stretch reads MERQLDAYCE…AVRGLYHYLN (85 aa). One can recognise a Tyr recombinase domain in the interval 106–285; sequence RLPKTLDTDR…DFQHLATVYD (180 aa). Residues Arg146, Lys170, His237, Arg240, and His263 contribute to the active site. Tyr272 (O-(3'-phospho-DNA)-tyrosine intermediate) is an active-site residue.

It belongs to the 'phage' integrase family. XerC subfamily. Forms a cyclic heterotetrameric complex composed of two molecules of XerC and two molecules of XerD.

It localises to the cytoplasm. In terms of biological role, site-specific tyrosine recombinase, which acts by catalyzing the cutting and rejoining of the recombining DNA molecules. The XerC-XerD complex is essential to convert dimers of the bacterial chromosome into monomers to permit their segregation at cell division. It also contributes to the segregational stability of plasmids. This Pseudomonas fluorescens protein is Tyrosine recombinase XerC.